Here is a 229-residue protein sequence, read N- to C-terminus: 2,3-bisphosphoglycerate-dependent phosphoglycerate mutase 2 (229 aa).

Substrate-binding positions include 12 to 19 (RHGESVAN), 25 to 26 (TG), Arg65, 92 to 95 (ERHY), Lys103, and 119 to 120 (RR). The active-site Tele-phosphohistidine intermediate is the His13. The active-site Proton donor/acceptor is Glu92.

Belongs to the phosphoglycerate mutase family. BPG-dependent PGAM subfamily.

The catalysed reaction is (2R)-2-phosphoglycerate = (2R)-3-phosphoglycerate. Its pathway is carbohydrate degradation; glycolysis; pyruvate from D-glyceraldehyde 3-phosphate: step 3/5. Its function is as follows. Catalyzes the interconversion of 2-phosphoglycerate and 3-phosphoglycerate. This Lactobacillus johnsonii (strain CNCM I-12250 / La1 / NCC 533) protein is 2,3-bisphosphoglycerate-dependent phosphoglycerate mutase 2.